The following is a 304-amino-acid chain: Glutaminase (304 aa).

Ser-63, Asn-113, Glu-157, Asn-164, Tyr-188, Tyr-240, and Val-258 together coordinate substrate.

It belongs to the glutaminase family. Homotetramer.

The enzyme catalyses L-glutamine + H2O = L-glutamate + NH4(+). This is Glutaminase from Ralstonia nicotianae (strain ATCC BAA-1114 / GMI1000) (Ralstonia solanacearum).